The chain runs to 541 residues: Malate synthase (541 aa).

Residue R169 is the Proton acceptor of the active site. D454 functions as the Proton donor in the catalytic mechanism.

The protein belongs to the malate synthase family.

It localises to the cytoplasm. It carries out the reaction glyoxylate + acetyl-CoA + H2O = (S)-malate + CoA + H(+). The protein operates within carbohydrate metabolism; glyoxylate cycle; (S)-malate from isocitrate: step 2/2. The polypeptide is Malate synthase (aceB) (Streptomyces clavuligerus).